The following is a 255-amino-acid chain: Type III pantothenate kinase (255 aa).

Residue 6–13 participates in ATP binding; sequence DVGNTNIV. Residues Tyr100 and 107–110 contribute to the substrate site; that span reads GADR. Residue Asp109 is the Proton acceptor of the active site. Position 129 (Asp129) interacts with K(+). Residue Thr132 coordinates ATP. Thr184 contributes to the substrate binding site.

It belongs to the type III pantothenate kinase family. Homodimer. It depends on NH4(+) as a cofactor. K(+) is required as a cofactor.

It localises to the cytoplasm. The enzyme catalyses (R)-pantothenate + ATP = (R)-4'-phosphopantothenate + ADP + H(+). Its pathway is cofactor biosynthesis; coenzyme A biosynthesis; CoA from (R)-pantothenate: step 1/5. In terms of biological role, catalyzes the phosphorylation of pantothenate (Pan), the first step in CoA biosynthesis. The polypeptide is Type III pantothenate kinase (Caldanaerobacter subterraneus subsp. tengcongensis (strain DSM 15242 / JCM 11007 / NBRC 100824 / MB4) (Thermoanaerobacter tengcongensis)).